A 217-amino-acid chain; its full sequence is Protein-L-isoaspartate O-methyltransferase (217 aa).

Ser-61 is a catalytic residue.

Belongs to the methyltransferase superfamily. L-isoaspartyl/D-aspartyl protein methyltransferase family.

Its subcellular location is the cytoplasm. The catalysed reaction is [protein]-L-isoaspartate + S-adenosyl-L-methionine = [protein]-L-isoaspartate alpha-methyl ester + S-adenosyl-L-homocysteine. Its function is as follows. Catalyzes the methyl esterification of L-isoaspartyl residues in peptides and proteins that result from spontaneous decomposition of normal L-aspartyl and L-asparaginyl residues. It plays a role in the repair and/or degradation of damaged proteins. The sequence is that of Protein-L-isoaspartate O-methyltransferase from Syntrophotalea carbinolica (strain DSM 2380 / NBRC 103641 / GraBd1) (Pelobacter carbinolicus).